The following is a 348-amino-acid chain: Mycothiol acetyltransferase (348 aa).

N-acetyltransferase domains lie at T12–T156 and V169–P330. Position 44 (E44) interacts with 1D-myo-inositol 2-(L-cysteinylamino)-2-deoxy-alpha-D-glucopyranoside. L91–V93 lines the acetyl-CoA pocket. 1D-myo-inositol 2-(L-cysteinylamino)-2-deoxy-alpha-D-glucopyranoside contacts are provided by E196, K235, and E253. Residues V257–V259 and Q264–R270 each bind acetyl-CoA. Y291 is a 1D-myo-inositol 2-(L-cysteinylamino)-2-deoxy-alpha-D-glucopyranoside binding site. Acetyl-CoA is bound at residue N296–H301. The disordered stretch occupies residues P320–S348. The segment covering D336–S348 has biased composition (polar residues).

It belongs to the acetyltransferase family. MshD subfamily. As to quaternary structure, monomer.

The enzyme catalyses 1D-myo-inositol 2-(L-cysteinylamino)-2-deoxy-alpha-D-glucopyranoside + acetyl-CoA = mycothiol + CoA + H(+). Catalyzes the transfer of acetyl from acetyl-CoA to desacetylmycothiol (Cys-GlcN-Ins) to form mycothiol. The polypeptide is Mycothiol acetyltransferase (Cellulomonas flavigena (strain ATCC 482 / DSM 20109 / BCRC 11376 / JCM 18109 / NBRC 3775 / NCIMB 8073 / NRS 134)).